A 324-amino-acid polypeptide reads, in one-letter code: Glyoxylate/hydroxypyruvate reductase B (324 aa).

Catalysis depends on residues R237 and E266. Residue H285 is the Proton donor of the active site.

It belongs to the D-isomer specific 2-hydroxyacid dehydrogenase family. GhrB subfamily. Homodimer.

It is found in the cytoplasm. It catalyses the reaction glycolate + NADP(+) = glyoxylate + NADPH + H(+). It carries out the reaction (R)-glycerate + NAD(+) = 3-hydroxypyruvate + NADH + H(+). The enzyme catalyses (R)-glycerate + NADP(+) = 3-hydroxypyruvate + NADPH + H(+). Catalyzes the NADPH-dependent reduction of glyoxylate and hydroxypyruvate into glycolate and glycerate, respectively. This chain is Glyoxylate/hydroxypyruvate reductase B, found in Enterobacter sp. (strain 638).